The chain runs to 93 residues: UPF0473 protein CHY_0543 (93 aa).

Belongs to the UPF0473 family.

This is UPF0473 protein CHY_0543 from Carboxydothermus hydrogenoformans (strain ATCC BAA-161 / DSM 6008 / Z-2901).